Consider the following 105-residue polypeptide: Serine protease inhibitor Kazal-type 8 (105 aa).

A signal peptide spans 1-21 (MKVIFSVAVLVLASSVWTSLA). Cystine bridges form between cysteine 44–cysteine 78, cysteine 51–cysteine 75, and cysteine 64–cysteine 96. Residues 44-98 (CIKNIQLCWILSYFKVSEPICGSNQVTYEGECHLCSGILYEDRTVIKVHDGPCEH) form the Kazal-like domain.

In terms of tissue distribution, expressed in epydiymis, in the cauda, corpus and caput.

It is found in the secreted. Probable serine protease inhibitor. The chain is Serine protease inhibitor Kazal-type 8 (Spink8) from Mus musculus (Mouse).